Consider the following 522-residue polypeptide: DNA damage-binding protein cmr1 (522 aa).

Residues 34 to 47 show a composition bias toward polar residues; the sequence is VFTPTLPNRATGSQ. Disordered stretches follow at residues 34–89 and 217–239; these read VFTP…KRKA and QEKP…DPVL. Over residues 49–59 the composition is skewed to basic residues; the sequence is KTKKKPAPKKV. One copy of the WD 1 repeat lies at 182–223; that stretch reads LTPERVYTMTFHPSETKPLIFAGDKMGHLGILDASQEKPTSV. Acidic residues predominate over residues 226 to 236; the sequence is EDEDEEDDDPD. 6 WD repeats span residues 244–284, 294–331, 336–376, 381–422, 445–488, and 491–522; these read PHTR…SVER, VPLS…QGSV, LSEK…RREP, EHQS…ASWK, GRWV…LAQL, and DGIT…CLWM.

This sequence belongs to the WD repeat DDB2/WDR76 family.

DNA-binding protein that binds to both single- and double-stranded DNA. Binds preferentially to UV-damaged DNA. May be involved in DNA-metabolic processes. This is DNA damage-binding protein cmr1 from Aspergillus oryzae (strain ATCC 42149 / RIB 40) (Yellow koji mold).